The sequence spans 435 residues: NADH-quinone oxidoreductase subunit D (435 aa).

The protein belongs to the complex I 49 kDa subunit family. In terms of assembly, NDH-1 is composed of 14 different subunits. Subunits NuoB, C, D, E, F, and G constitute the peripheral sector of the complex.

The protein resides in the cell inner membrane. It catalyses the reaction a quinone + NADH + 5 H(+)(in) = a quinol + NAD(+) + 4 H(+)(out). Functionally, NDH-1 shuttles electrons from NADH, via FMN and iron-sulfur (Fe-S) centers, to quinones in the respiratory chain. The immediate electron acceptor for the enzyme in this species is believed to be ubiquinone. Couples the redox reaction to proton translocation (for every two electrons transferred, four hydrogen ions are translocated across the cytoplasmic membrane), and thus conserves the redox energy in a proton gradient. In Xanthomonas euvesicatoria pv. vesicatoria (strain 85-10) (Xanthomonas campestris pv. vesicatoria), this protein is NADH-quinone oxidoreductase subunit D.